The following is a 288-amino-acid chain: Fibroblast growth factor 2 (288 aa).

The propeptide occupies 1-142 (MVGVGGGDVE…TMAAGSITTL (142 aa)). Residues 1 to 156 (MVGVGGGDVE…EDGGSGAFPP (156 aa)) are disordered. Over residues 72 to 84 (ERPSGSRLGDHGR) the composition is skewed to basic and acidic residues. Residues arginine 108, arginine 110, and arginine 112 each carry the omega-N-methylarginine; alternate modification. A symmetric dimethylarginine; alternate mark is found at arginine 108, arginine 110, and arginine 112. Residues 113–132 (GTAAPRAAPAARGSRPGPAG) show a composition bias toward low complexity. Position 169 (asparagine 169) interacts with heparin. The short motif at 179–181 (DGR) is the Cell attachment site; atypical element. Tyrosine 215 carries the phosphotyrosine; by TEC modification. Residues 221–223 (DGR) carry the Cell attachment site; atypical motif. Lysine 228 is covalently cross-linked (Glycyl lysine isopeptide (Lys-Gly) (interchain with G-Cter in SUMO1)). Residues 261–277 (KRTGQYKLGSKTGPGQK) form a heparin-binding region.

The protein belongs to the heparin-binding growth factors family. In terms of assembly, monomer. Homodimer. Interacts with FGFR1, FGFR2, FGFR3 and FGFR4. Affinity between fibroblast growth factors (FGFs) and their receptors is increased by heparan sulfate glycosaminoglycans that function as coreceptors. Interacts with CSPG4, FGFBP1 and TEC. Found in a complex with FGFBP1, FGF1 and FGF2. Interacts with FGFBP3. Interacts with integrin ITGAV:ITGB3; the interaction is required for FGF2 signaling. Interacts with SNORC (via the extracellular domain). Interacts with glypican GPC3. Phosphorylation at Tyr-215 regulates FGF2 unconventional secretion.

It is found in the secreted. Its subcellular location is the nucleus. In terms of biological role, acts as a ligand for FGFR1, FGFR2, FGFR3 and FGFR4. Also acts as an integrin ligand which is required for FGF2 signaling. Binds to integrin ITGAV:ITGB3. Plays an important role in the regulation of cell survival, cell division, cell differentiation and cell migration. Functions as a potent mitogen in vitro. Can induce angiogenesis. Mediates phosphorylation of ERK1/2 and thereby promotes retinal lens fiber differentiation. The polypeptide is Fibroblast growth factor 2 (Pan troglodytes (Chimpanzee)).